The primary structure comprises 1578 residues: Bromodomain-containing protein DDB_G0270170 (1578 aa).

Residues 1 to 12 (MSLEQQDETVVE) show a composition bias toward acidic residues. Disordered stretches follow at residues 1–39 (MSLEQQDETVVEEETKTSFETNNSTANNTNNNTDNTYKE), 108–127 (NNNNGDENNKDIHDSSNNTE), 151–285 (HYSD…AKEL), and 319–454 (NENI…TTQT). Residues 18-35 (SFETNNSTANNTNNNTDN) show a composition bias toward low complexity. Over residues 152–163 (YSDDESSKEKQD) the composition is skewed to basic and acidic residues. Low complexity-rich tracts occupy residues 164-185 (NINSNNNNNKNKNEQIINSENI) and 197-231 (TTPSDTPPTLTNNTSSTTTTTTTNNTTTAATTTTN). Composition is skewed to polar residues over residues 319–332 (NENIFSSSRKSTTK) and 340–351 (TASTTNTPIITA). A compositionally biased stretch (low complexity) spans 352 to 383 (QQNTTPLSPTQTTTTTTTPTTTTAQQNTPAQT). The span at 384-395 (ESKPPTTISINI) shows a compositional bias: polar residues. Low complexity-rich tracts occupy residues 396 to 407 (KGSKSPKTTGGK) and 417 to 433 (VVISQPVVPSTPVVATT). Over residues 443-454 (STANNNSETTQT) the composition is skewed to polar residues. Positions 479–506 (SDSATIQQLQQSISMLEDKIRLISSNNK) form a coiled coil. 2 disordered regions span residues 543–565 (FTKSSTLAPPSSERKYSNLYSDD) and 580–730 (IPIP…RMGK). Low complexity-rich tracts occupy residues 604 to 653 (NTST…PPQQ) and 660 to 686 (TQQENTSSTTTTTTTTTTTTNTEDTTT). In terms of domain architecture, Bromo spans 735 to 841 (VVLTPVFKRC…DVFEKGFPKV (107 aa)). The stretch at 851–903 (KNVDQEKIEKLSNDLKNVTKELEKFKKDDSNSINNNNNNNNNYNNNNNNNNNN) forms a coiled coil. 4 disordered regions span residues 874 to 969 (KFKK…KVTT), 1039 to 1167 (HALP…NNNN), 1184 to 1452 (SIPE…TDSA), and 1480 to 1544 (EREE…KGNM). Low complexity-rich tracts occupy residues 881–911 (NSINNNNNNNNNYNNNNNNNNNNSSSSSSRS), 918–961 (SSGS…SSNN), and 1047–1061 (SSTHSSHSSSHDSSS). In terms of domain architecture, NET spans 957–1039 (SSSNNKKYPK…QYKNGEIPQH (83 aa)). Residues 1064 to 1077 (REIEKLQKQLDRLG) show a composition bias toward basic and acidic residues. Basic residues predominate over residues 1092–1107 (HSKRISKPISKARGRK). The span at 1112-1167 (SSSNLNNSSNNINNNNNNINNYNNNNNYNNNNNNNLNNNNNNNINSNLNNNLNNNN) shows a compositional bias: low complexity. Residues 1113–1150 (SSNLNNSSNNINNNNNNINNYNNNNNYNNNNNNNLNNN) are a coiled coil. Over residues 1192–1204 (TDISESSDSESDS) the composition is skewed to acidic residues. Composition is skewed to low complexity over residues 1205 to 1218 (ESGSSDSSSSYSDS) and 1231 to 1334 (YNNS…SLTN). Residues 1280 to 1308 (NSNNNNSNNNNNNVNNNNNNHNNNNHNNN) adopt a coiled-coil conformation. A compositionally biased stretch (polar residues) spans 1356–1369 (SVASWSFDPTNNKE). Residues 1370–1386 (SSSSSSTSSTSSTSNTT) are compositionally biased toward low complexity. The segment covering 1387-1399 (LTPIIQQSSLTHA) has biased composition (polar residues). 2 stretches are compositionally biased toward low complexity: residues 1400–1424 (SSPISSSTFVSFSSSSSTPPTNNLS) and 1432–1451 (NSPSINSPSSPSANNNNTDS). Residues 1462–1544 (TLKQKEKERV…EKLNNSKGNM (83 aa)) are a coiled coil. The span at 1480-1538 (EREEKEEELKKEEEKKRIEMEEIKRLAKEKEEREAEETRKQIESERAAAREAREKEKLN) shows a compositional bias: basic and acidic residues.

This is Bromodomain-containing protein DDB_G0270170 from Dictyostelium discoideum (Social amoeba).